Consider the following 63-residue polypeptide: Large ribosomal subunit protein bL32 (63 aa).

Disordered regions lie at residues 1–25 and 42–63; these read MAVP…LTTP and VSPK…QNND. A compositionally biased stretch (basic residues) spans 7–20; that stretch reads KTSKQKKRSRRGHI. A compositionally biased stretch (polar residues) spans 54–63; that stretch reads ANENKQQNND.

It belongs to the bacterial ribosomal protein bL32 family.

The chain is Large ribosomal subunit protein bL32 from Lactobacillus johnsonii (strain CNCM I-12250 / La1 / NCC 533).